Here is a 142-residue protein sequence, read N- to C-terminus: Ribosome maturation factor RimP (142 aa).

This sequence belongs to the RimP family.

It is found in the cytoplasm. Required for maturation of 30S ribosomal subunits. The polypeptide is Ribosome maturation factor RimP (Nitrosospira multiformis (strain ATCC 25196 / NCIMB 11849 / C 71)).